The primary structure comprises 625 residues: Chaperone protein DnaK (625 aa).

A Phosphothreonine; by autocatalysis modification is found at T197. The tract at residues 598-625 is disordered; sequence AYAKEQGGTQQGTDTKKKDDDVIDAEVE.

The protein belongs to the heat shock protein 70 family.

In terms of biological role, acts as a chaperone. The chain is Chaperone protein DnaK from Helicobacter hepaticus (strain ATCC 51449 / 3B1).